The primary structure comprises 576 residues: CDPK-related kinase 1 (576 aa).

The segment at 1–39 is disordered; it reads MGICHGKPVEQQSKSLPVSGETNEAPTNSQPPAKSSGFP. Residue Gly2 is the site of N-myristoyl glycine attachment. Residues 10-33 are compositionally biased toward polar residues; sequence EQQSKSLPVSGETNEAPTNSQPPA. The region spanning 123 to 385 is the Protein kinase domain; that stretch reads YEIDGEVGRG…AAQALCHPWL (263 aa). Residues 129 to 137 and Lys155 contribute to the ATP site; that span reads VGRGHFGYT. Residue Asp251 is the Proton acceptor of the active site. Ser291 bears the Phosphoserine mark. A Phosphoserine; by CPK1 and CPK34 modification is found at Ser333. Positions 390-420 are autoinhibitory domain; it reads ELKIPSDMIIYKLVKVYIMSTSLRKSALAAL. Residues 409 to 429 are calmodulin binding (CaMBD); sequence STSLRKSALAALAKTLTVPQL. EF-hand domains follow at residues 427–463, 464–499, 500–539, and 542–571; these read PQLA…STDA, MKDS…VYQL, EAME…GPSV, and HVVL…VSSR. Residues Ser442, Asn444, Tyr446, Lys483, Glu488, Asp519, Asn521, Glu528, Asp553, and Lys555 each coordinate Ca(2+). Ser557 is modified (phosphoserine).

Belongs to the protein kinase superfamily. Ser/Thr protein kinase family. CDPK subfamily. In terms of assembly, binds calmodulin (CaM) in a calcium-dependent manner. Interacts with HSFA1A. Autophosphorylated.

It localises to the membrane. It catalyses the reaction L-seryl-[protein] + ATP = O-phospho-L-seryl-[protein] + ADP + H(+). The enzyme catalyses L-threonyl-[protein] + ATP = O-phospho-L-threonyl-[protein] + ADP + H(+). With respect to regulation, activated by calcium and calmodulin. Autophosphorylation may play an important role in the regulation of the kinase activity. Functionally, may play a role in signal transduction pathways that involve calcium as a second messenger. Serine/threonine kinase that phosphorylates histone H3. Confers thermotolerance; involved in the heat-shock-mediated calmodulin-dependent signal transduction leading to the activation of heat-shock transcription factors (HSFs); phosphorylates HSFA1A. In Arabidopsis thaliana (Mouse-ear cress), this protein is CDPK-related kinase 1 (CRK1).